The sequence spans 301 residues: Protein ARMCX6 (301 aa).

Positions 1–6 are mitochondrion outer membrane (MOM)-targeting sequence; the sequence is MGRARE. Topologically, residues 1–7 are mitochondrial intermembrane; sequence MGRAREM. The chain crosses the membrane as a helical; Signal-anchor span at residues 8-25; sequence GWMAAGLMIGAGACYCMY. The tract at residues 26–36 is mitochondrion outer membrane (MOM)-targeting sequence; sequence KLTMGRDEGNE. Residues 26 to 301 are Cytoplasmic-facing; sequence KLTMGRDEGN…REMLVEAISP (276 aa). Residues 70 to 105 form a disordered region; sequence SEDGEWDEPGAPGGTEDRRSGGGKANRAHPTKQRPF.

This sequence belongs to the eutherian X-chromosome-specific Armcx family.

It localises to the mitochondrion. It is found in the mitochondrion outer membrane. May regulate the dynamics and distribution of mitochondria in neural cells. The polypeptide is Protein ARMCX6 (Armcx6) (Rattus norvegicus (Rat)).